Consider the following 261-residue polypeptide: MTHQTHAYHMVNPSPWPLTGALSALLMTSGLVMWFHYHSTILVLLGLLTNILTMYQWWRDVVREGTFQGHHTPTVQKGLRYGMVLFIISEVFFFAGFFWAFYHSSLAPTPELGGCWPPTGIHPLDPMEVPLLNTSVLLASGVTITWAHHSLMEGNRKQMLQALFITISLGIYFTLLQASEYHEASFSISDGIYGSTFFMATGFHGLHVIIGSTFLAVCFLRQLKFHFTSNHHFGFEAAAWYWHFVDVVWLFLYVSIYWWGS.

The Mitochondrial matrix segment spans residues 1-15 (MTHQTHAYHMVNPSP). Residues 16-34 (WPLTGALSALLMTSGLVMW) traverse the membrane as a helical segment. Residues 35–40 (FHYHST) are Mitochondrial intermembrane-facing. Residues 41–66 (ILVLLGLLTNILTMYQWWRDVVREGT) traverse the membrane as a helical segment. Residues 67 to 72 (FQGHHT) lie on the Mitochondrial matrix side of the membrane. Residues 73 to 105 (PTVQKGLRYGMVLFIISEVFFFAGFFWAFYHSS) form a helical membrane-spanning segment. Over 106 to 128 (LAPTPELGGCWPPTGIHPLDPME) the chain is Mitochondrial intermembrane. A helical transmembrane segment spans residues 129-152 (VPLLNTSVLLASGVTITWAHHSLM). Residues 153–155 (EGN) lie on the Mitochondrial matrix side of the membrane. Residues 156–183 (RKQMLQALFITISLGIYFTLLQASEYHE) traverse the membrane as a helical segment. Residues 184–190 (ASFSISD) lie on the Mitochondrial intermembrane side of the membrane. The chain crosses the membrane as a helical span at residues 191–223 (GIYGSTFFMATGFHGLHVIIGSTFLAVCFLRQL). At 224–232 (KFHFTSNHH) the chain is on the mitochondrial matrix side. The helical transmembrane segment at 233–256 (FGFEAAAWYWHFVDVVWLFLYVSI) threads the bilayer. The Mitochondrial intermembrane portion of the chain corresponds to 257 to 261 (YWWGS).

The protein belongs to the cytochrome c oxidase subunit 3 family. As to quaternary structure, component of the cytochrome c oxidase (complex IV, CIV), a multisubunit enzyme composed of 14 subunits. The complex is composed of a catalytic core of 3 subunits MT-CO1, MT-CO2 and MT-CO3, encoded in the mitochondrial DNA, and 11 supernumerary subunits COX4I, COX5A, COX5B, COX6A, COX6B, COX6C, COX7A, COX7B, COX7C, COX8 and NDUFA4, which are encoded in the nuclear genome. The complex exists as a monomer or a dimer and forms supercomplexes (SCs) in the inner mitochondrial membrane with NADH-ubiquinone oxidoreductase (complex I, CI) and ubiquinol-cytochrome c oxidoreductase (cytochrome b-c1 complex, complex III, CIII), resulting in different assemblies (supercomplex SCI(1)III(2)IV(1) and megacomplex MCI(2)III(2)IV(2)).

It localises to the mitochondrion inner membrane. It catalyses the reaction 4 Fe(II)-[cytochrome c] + O2 + 8 H(+)(in) = 4 Fe(III)-[cytochrome c] + 2 H2O + 4 H(+)(out). Component of the cytochrome c oxidase, the last enzyme in the mitochondrial electron transport chain which drives oxidative phosphorylation. The respiratory chain contains 3 multisubunit complexes succinate dehydrogenase (complex II, CII), ubiquinol-cytochrome c oxidoreductase (cytochrome b-c1 complex, complex III, CIII) and cytochrome c oxidase (complex IV, CIV), that cooperate to transfer electrons derived from NADH and succinate to molecular oxygen, creating an electrochemical gradient over the inner membrane that drives transmembrane transport and the ATP synthase. Cytochrome c oxidase is the component of the respiratory chain that catalyzes the reduction of oxygen to water. Electrons originating from reduced cytochrome c in the intermembrane space (IMS) are transferred via the dinuclear copper A center (CU(A)) of subunit 2 and heme A of subunit 1 to the active site in subunit 1, a binuclear center (BNC) formed by heme A3 and copper B (CU(B)). The BNC reduces molecular oxygen to 2 water molecules using 4 electrons from cytochrome c in the IMS and 4 protons from the mitochondrial matrix. In Dugong dugon (Dugong), this protein is Cytochrome c oxidase subunit 3 (MT-CO3).